Here is an 842-residue protein sequence, read N- to C-terminus: Probable cleavage and polyadenylation specificity factor subunit 2 (842 aa).

Residues 414 to 425 (AEETRIRMERAR) are compositionally biased toward basic and acidic residues. 2 disordered regions span residues 414–442 (AEET…DDIA) and 708–747 (METF…SIPI). The span at 432 to 441 (ESDDSDDDDI) shows a compositional bias: acidic residues. Residues 731-747 (SNGQSKENDENASSIPI) show a composition bias toward polar residues.

Belongs to the metallo-beta-lactamase superfamily. RNA-metabolizing metallo-beta-lactamase-like family. CPSF2/YSH1 subfamily. As to quaternary structure, CPSF is a heterotetramer composed of four distinct subunits 160, 100, 70 and 30 kDa.

It is found in the nucleus. Functionally, CPSF plays a key role in pre-mRNA 3'-end formation, recognizing the AAUAAA signal sequence and interacting with poly(A)polymerase and other factors to bring about cleavage and poly(A) addition. This is Probable cleavage and polyadenylation specificity factor subunit 2 from Caenorhabditis briggsae.